We begin with the raw amino-acid sequence, 268 residues long: Putative esterase/lipase 2 (268 aa).

The active site involves His-28. His-96 acts as the Charge relay system in catalysis.

This sequence belongs to the lipase/esterase LIP3/BchO family.

In Mycoplasma pneumoniae (strain ATCC 29342 / M129 / Subtype 1) (Mycoplasmoides pneumoniae), this protein is Putative esterase/lipase 2.